Reading from the N-terminus, the 258-residue chain is Phosphonates import ATP-binding protein PhnC 1 (258 aa).

In terms of domain architecture, ABC transporter spans 2–246 (IEFKDVGLVY…TFEEIYGRSI (245 aa)). Position 35 to 42 (35 to 42 (GLSGAGKS)) interacts with ATP.

The protein belongs to the ABC transporter superfamily. Phosphonates importer (TC 3.A.1.9.1) family. The complex is composed of two ATP-binding proteins (PhnC), two transmembrane proteins (PhnE) and a solute-binding protein (PhnD).

Its subcellular location is the cell membrane. It carries out the reaction phosphonate(out) + ATP + H2O = phosphonate(in) + ADP + phosphate + H(+). Part of the ABC transporter complex PhnCDE involved in phosphonates import. Responsible for energy coupling to the transport system. This is Phosphonates import ATP-binding protein PhnC 1 from Oceanobacillus iheyensis (strain DSM 14371 / CIP 107618 / JCM 11309 / KCTC 3954 / HTE831).